Reading from the N-terminus, the 334-residue chain is MTKVYYDQSVEKDALQGKKIAIIGYGSQGHAHAQNLKDNGYDVIVGIRPGHSFDKAKEDGFDVYPVAEAVKQADVIMVLLPDEIQGNVYKNEIEPNLEAGNALAFAHGFNIHFEVIKPPKDVDVFLVAPKGPGHLVRRTFVEGTAVPALFGVQQDATGQARDISLSYAKGIGATRAGVIETTFKEETETDLFGEQAVLCGGIHKLIQSGFETLVEAGYQKELAYFEVLHEMKLIVDLMYEGGMENVRYSISNTAEYGDYVSGPRVITPDVKDNMKAVLKDIQNGNFANSFVKDNENGFKEFYKLREQQHGHEIEAVGRELRKMMPFIKSKSIQK.

The 180-residue stretch at 2 to 181 (TKVYYDQSVE…GATRAGVIET (180 aa)) folds into the KARI N-terminal Rossmann domain. Residues 25–28 (YGSQ), R48, S52, and 82–85 (DEIQ) contribute to the NADP(+) site. Residue H107 is part of the active site. Position 133 (G133) interacts with NADP(+). One can recognise a KARI C-terminal knotted domain in the interval 182-327 (TFKEETETDL…RELRKMMPFI (146 aa)). Residues D190, E194, E226, and E230 each coordinate Mg(2+). S251 contributes to the substrate binding site.

Belongs to the ketol-acid reductoisomerase family. The cofactor is Mg(2+).

The catalysed reaction is (2R)-2,3-dihydroxy-3-methylbutanoate + NADP(+) = (2S)-2-acetolactate + NADPH + H(+). The enzyme catalyses (2R,3R)-2,3-dihydroxy-3-methylpentanoate + NADP(+) = (S)-2-ethyl-2-hydroxy-3-oxobutanoate + NADPH + H(+). The protein operates within amino-acid biosynthesis; L-isoleucine biosynthesis; L-isoleucine from 2-oxobutanoate: step 2/4. It participates in amino-acid biosynthesis; L-valine biosynthesis; L-valine from pyruvate: step 2/4. In terms of biological role, involved in the biosynthesis of branched-chain amino acids (BCAA). Catalyzes an alkyl-migration followed by a ketol-acid reduction of (S)-2-acetolactate (S2AL) to yield (R)-2,3-dihydroxy-isovalerate. In the isomerase reaction, S2AL is rearranged via a Mg-dependent methyl migration to produce 3-hydroxy-3-methyl-2-ketobutyrate (HMKB). In the reductase reaction, this 2-ketoacid undergoes a metal-dependent reduction by NADPH to yield (R)-2,3-dihydroxy-isovalerate. This chain is Ketol-acid reductoisomerase (NADP(+)), found in Staphylococcus haemolyticus (strain JCSC1435).